The chain runs to 208 residues: Guanylate kinase (208 aa).

In terms of domain architecture, Guanylate kinase-like spans 4–185 (GNLYILSAPS…ALADLVHILR (182 aa)). ATP is bound at residue 11–18 (APSGAGKS).

Belongs to the guanylate kinase family.

Its subcellular location is the cytoplasm. It carries out the reaction GMP + ATP = GDP + ADP. Its function is as follows. Essential for recycling GMP and indirectly, cGMP. This is Guanylate kinase from Mannheimia succiniciproducens (strain KCTC 0769BP / MBEL55E).